We begin with the raw amino-acid sequence, 278 residues long: Sulfur carrier protein FdhD (278 aa).

C120 (cysteine persulfide intermediate) is an active-site residue.

It belongs to the FdhD family.

The protein localises to the cytoplasm. Its function is as follows. Required for formate dehydrogenase (FDH) activity. Acts as a sulfur carrier protein that transfers sulfur from IscS to the molybdenum cofactor prior to its insertion into FDH. The polypeptide is Sulfur carrier protein FdhD (Bordetella petrii (strain ATCC BAA-461 / DSM 12804 / CCUG 43448)).